The primary structure comprises 495 residues: Leucine aminopeptidase 2 (495 aa).

The first 21 residues, 1–21, serve as a signal peptide directing secretion; it reads MKTQLLSLGVALTAISQGVIA. The region spanning 124 to 218 is the PA domain; the sequence is PPADKITAEL…ADGKNLASLV (95 aa). Residues Asn142 and Asn235 are each glycosylated (N-linked (GlcNAc...) asparagine). Residues His259 and Asp271 each coordinate Zn(2+). N-linked (GlcNAc...) asparagine glycosylation occurs at Asn272. Glu303 acts as the Proton acceptor in catalysis. Zn(2+) contacts are provided by Glu304 and Asp332. The N-linked (GlcNAc...) asparagine glycan is linked to Asn352. His430 serves as a coordination point for Zn(2+). The tract at residues 464 to 495 is disordered; the sequence is GFPTRPKTGKRDVSPRGQSMPGGGCGHHSVFM.

This sequence belongs to the peptidase M28 family. M28A subfamily. As to quaternary structure, monomer. It depends on Zn(2+) as a cofactor.

Its subcellular location is the secreted. Functionally, extracellular aminopeptidase that releases a wide variety of amino acids from natural peptides and contributes to pathogenicity. The chain is Leucine aminopeptidase 2 (LAP2) from Arthroderma otae (strain ATCC MYA-4605 / CBS 113480) (Microsporum canis).